The following is a 146-amino-acid chain: Calmodulin-like protein 5 (146 aa).

N-acetylalanine is present on A2. EF-hand domains are found at residues 8-43 (EEEA…TGKN), 44-74 (LSEA…TAAK), 78-113 (AGLE…LGQP), and 114-146 (LPQE…LAQE). Ca(2+)-binding residues include D21, D23, N25, T27, E32, D57, D59, D61, E63, E68, D91, D93, D95, H97, E102, D127, D129, D131, R133, and E138.

In terms of assembly, associates with transglutaminase 3. Particularly abundant in the epidermis where its expression is directly related to keratinocyte differentiation. Very low expression in lung.

In terms of biological role, binds calcium. May be involved in terminal differentiation of keratinocytes. This is Calmodulin-like protein 5 (CALML5) from Homo sapiens (Human).